The chain runs to 32 residues: Conotoxin pr6b (32 aa).

Residues Pro-6, Pro-13, Pro-20, and Pro-29 each carry the 4-hydroxyproline modification. 3 disulfides stabilise this stretch: Cys-7–Cys-18, Cys-14–Cys-23, and Cys-17–Cys-31.

Expressed by the venom duct.

Its subcellular location is the secreted. Functionally, intraperitoneal injection into fish (0.5 nmol) provokes vertical suspension and paralysis after 6 minutes. In Conus parius (Cone snail), this protein is Conotoxin pr6b.